Here is a 482-residue protein sequence, read N- to C-terminus: Zinc finger CCCH domain-containing protein 40 (482 aa).

The segment at 157–184 adopts a C3H1-type zinc-finger fold; the sequence is RNRAHVCSFYVRGECTRGAECPYRHEMP. Residues 228–301 enclose the RRM domain; the sequence is RTLYIGGLNN…IRLKLMWGKP (74 aa). Low complexity-rich tracts occupy residues 329–347 and 389–428; these read SQQQ…GQQQ and PGPQ…YGGY. Positions 329–482 are disordered; sequence SQQQSGDQPQ…VPPPQQTTQN (154 aa). Positions 429-446 are enriched in pro residues; it reads MPPPRMPYPPPPQYPPYQ. Over residues 452–466 the composition is skewed to low complexity; the sequence is PAQSQASSSQQPAPA. The span at 473-482 shows a compositional bias: pro residues; sequence VPPPQQTTQN.

This chain is Zinc finger CCCH domain-containing protein 40, found in Oryza sativa subsp. japonica (Rice).